We begin with the raw amino-acid sequence, 305 residues long: Probable lipid kinase YegS-like (305 aa).

The DAGKc domain maps to 1–129; that stretch reads MTQRRAMLIL…VDLGEVGGKL (129 aa). ATP contacts are provided by residues Thr39, 65 to 71, and Thr92; that span reads GDGTLRD. Residues Leu210, Asp213, and Leu215 each contribute to the Mg(2+) site. Glu268 functions as the Proton acceptor in the catalytic mechanism.

It belongs to the diacylglycerol/lipid kinase family. YegS lipid kinase subfamily. It depends on Mg(2+) as a cofactor. Requires Ca(2+) as cofactor.

The protein resides in the cytoplasm. Probably phosphorylates lipids; the in vivo substrate is unknown. The sequence is that of Probable lipid kinase YegS-like from Pseudomonas syringae pv. syringae (strain B728a).